We begin with the raw amino-acid sequence, 276 residues long: Diaminopimelate epimerase (276 aa).

3 residues coordinate substrate: asparagine 13, glutamine 46, and asparagine 66. Cysteine 75 serves as the catalytic Proton donor. Substrate contacts are provided by residues 76–77 (GN), asparagine 159, asparagine 192, and 210–211 (ER). The active-site Proton acceptor is cysteine 219. 220–221 (GT) provides a ligand contact to substrate.

The protein belongs to the diaminopimelate epimerase family. Homodimer.

The protein localises to the cytoplasm. The catalysed reaction is (2S,6S)-2,6-diaminopimelate = meso-2,6-diaminopimelate. Its pathway is amino-acid biosynthesis; L-lysine biosynthesis via DAP pathway; DL-2,6-diaminopimelate from LL-2,6-diaminopimelate: step 1/1. Its function is as follows. Catalyzes the stereoinversion of LL-2,6-diaminopimelate (L,L-DAP) to meso-diaminopimelate (meso-DAP), a precursor of L-lysine and an essential component of the bacterial peptidoglycan. The protein is Diaminopimelate epimerase of Aeromonas hydrophila subsp. hydrophila (strain ATCC 7966 / DSM 30187 / BCRC 13018 / CCUG 14551 / JCM 1027 / KCTC 2358 / NCIMB 9240 / NCTC 8049).